Here is a 427-residue protein sequence, read N- to C-terminus: Trigger factor (427 aa).

A PPIase FKBP-type domain is found at 163-248 (GDTVVIDFVG…VHEVKAKEVP (86 aa)).

Belongs to the FKBP-type PPIase family. Tig subfamily.

The protein resides in the cytoplasm. It catalyses the reaction [protein]-peptidylproline (omega=180) = [protein]-peptidylproline (omega=0). In terms of biological role, involved in protein export. Acts as a chaperone by maintaining the newly synthesized protein in an open conformation. Functions as a peptidyl-prolyl cis-trans isomerase. The sequence is that of Trigger factor from Streptococcus equi subsp. zooepidemicus (strain MGCS10565).